The chain runs to 421 residues: Elongation factor 1-alpha (421 aa).

One can recognise a tr-type G domain in the interval 4–220 (NRHQNLAVIG…NGLPVPQPPT (217 aa)). Positions 13 to 20 (GHVDHGKS) are G1. 13-20 (GHVDHGKS) contacts GTP. Mg(2+) is bound at residue Ser-20. The interval 69-73 (GVTID) is G2. The interval 90-93 (DCPG) is G3. GTP-binding positions include 90-94 (DCPGH) and 145-148 (NKMD). Positions 145–148 (NKMD) are G4. Positions 184–186 (SAF) are G5.

The protein belongs to the TRAFAC class translation factor GTPase superfamily. Classic translation factor GTPase family. EF-Tu/EF-1A subfamily.

The protein localises to the cytoplasm. It carries out the reaction GTP + H2O = GDP + phosphate + H(+). Functionally, GTP hydrolase that promotes the GTP-dependent binding of aminoacyl-tRNA to the A-site of ribosomes during protein biosynthesis. In Halobacterium salinarum (strain ATCC 700922 / JCM 11081 / NRC-1) (Halobacterium halobium), this protein is Elongation factor 1-alpha.